The following is a 1247-amino-acid chain: Respiratory nitrate reductase 1 alpha chain (1247 aa).

The 4Fe-4S Mo/W bis-MGD-type domain occupies 43–107 (DKIVRSTHGV…SYSWYLYSAN (65 aa)). Residues histidine 50, cysteine 54, cysteine 58, and cysteine 93 each coordinate [4Fe-4S] cluster. Aspartate 223 serves as a coordination point for Mo-bis(molybdopterin guanine dinucleotide).

It belongs to the prokaryotic molybdopterin-containing oxidoreductase family. Dimer of heterotrimers each composed of an alpha, a beta and a gamma chain. Alpha and beta are catalytic chains; gamma chains are involved in binding the enzyme complex to the cytoplasmic membrane. Interacts with the NarJ chaperone. It depends on [4Fe-4S] cluster as a cofactor. The cofactor is Mo-bis(molybdopterin guanine dinucleotide).

Its subcellular location is the cell membrane. It carries out the reaction nitrate + a quinol = a quinone + nitrite + H2O. Functionally, the nitrate reductase enzyme complex allows E.coli to use nitrate as an electron acceptor during anaerobic growth. The alpha chain is the actual site of nitrate reduction. This chain is Respiratory nitrate reductase 1 alpha chain (narG), found in Escherichia coli (strain K12).